A 413-amino-acid polypeptide reads, in one-letter code: MKIATLSIGDELLRGEVVDTNAARIAARLADAGLAVGRHLTVGDDEGEIEAALGMLAPAHDAVIVTGGLGPTDDDVTARAAARATGRRLVLNEAALDRLRDFFSRRGRELYPANERQCLLPAKAGLIPNALGTACGFHLLHGECFLVFLPGVPAEMARMLEESVVPLVLDRRSGPEVTRTAVLTLFGLSEAEIGGRLSGLERSRGGLGIAYCVDFPVVQVKLRATARSEEEAAEIIAGGLPLVRERLGDVIVAEGDNTIDTAVARLFREKGLTLALAESCTGGLIAKRITDVAGSSAYFFMGLVTYANEAKERLLGVPTALLAEKGAVSADVARAMARGARHVAGSDLALAVTGIAGPDGGSDDKPVGTVYLALADRAGCSVKSYRFAGERDAIRTVTAVTALDWLRRRLLTA.

It belongs to the CinA family.

This Geobacter sulfurreducens (strain ATCC 51573 / DSM 12127 / PCA) protein is CinA-like protein.